The following is a 582-amino-acid chain: Probable DNA ligase (582 aa).

Residue Glu243 coordinates ATP. Lys245 serves as the catalytic N6-AMP-lysine intermediate. ATP contacts are provided by Arg250, Arg265, Glu295, Phe335, Arg410, and Lys416.

Belongs to the ATP-dependent DNA ligase family. It depends on Mg(2+) as a cofactor.

The enzyme catalyses ATP + (deoxyribonucleotide)n-3'-hydroxyl + 5'-phospho-(deoxyribonucleotide)m = (deoxyribonucleotide)n+m + AMP + diphosphate.. In terms of biological role, DNA ligase that seals nicks in double-stranded DNA during DNA replication, DNA recombination and DNA repair. This chain is Probable DNA ligase, found in Dictyoglomus turgidum (strain DSM 6724 / Z-1310).